The sequence spans 382 residues: Sialidase (382 aa).

Arg-37 contributes to the substrate binding site. The active-site Proton acceptor is Asp-62. 3 BNR repeats span residues 71–82, 140–151, and 208–219; these read ARSTDFGKTWSY, IYSDDNGLTWSN, and IYSKDNGETWTM. Arg-245 lines the substrate pocket. The stretch at 255 to 266 is one BNR 4 repeat; that stretch reads YISHDLGTTWEI. Tyr-347 (nucleophile) is an active-site residue.

It belongs to the glycosyl hydrolase 33 family.

Its subcellular location is the secreted. It catalyses the reaction Hydrolysis of alpha-(2-&gt;3)-, alpha-(2-&gt;6)-, alpha-(2-&gt;8)- glycosidic linkages of terminal sialic acid residues in oligosaccharides, glycoproteins, glycolipids, colominic acid and synthetic substrates.. Its function is as follows. Sialidases have been suggested to be pathogenic factors in microbial infections. In Clostridium perfringens, this protein is Sialidase (nanH).